The following is a 327-amino-acid chain: Toluene-4-monooxygenase system, hydroxylase component subunit beta (327 aa).

The protein belongs to the TmoE/XamoE family. In terms of assembly, the alkene monooxygenase multicomponent enzyme system is composed of an electron transfer component and a monooxygenase component interacting with the effector protein TmoD. The electron transfer component is composed of a ferredoxin reductase (TmoF) and a ferredoxin (TmoC), and the monooxygenase component is formed by a heterohexamer (dimer of heterotrimers) of two alpha subunits (TmoA), two beta subunits (TmoE) and two gamma subunits (TmoB).

It catalyses the reaction toluene + NADH + O2 + H(+) = 4-methylphenol + NAD(+) + H2O. Its pathway is xenobiotic degradation; toluene degradation. With respect to regulation, inhibited by Zn(2+) and Cu(2+). Its function is as follows. Component of the toluene-4-monooxygenase multicomponent enzyme system which catalyzes the O2- and NADH-dependent hydroxylation of toluene to form p-cresol. Also able to convert benzene to phenol, catechol, and 1,2,3-trihydroxybenzene by successive hydroxylations. In Ectopseudomonas mendocina (Pseudomonas mendocina), this protein is Toluene-4-monooxygenase system, hydroxylase component subunit beta.